A 381-amino-acid polypeptide reads, in one-letter code: L-lactate dehydrogenase (381 aa).

An FMN hydroxy acid dehydrogenase domain is found at 1–380 (MIISSANDYR…TRDALVDLSK (380 aa)). Residue tyrosine 24 coordinates substrate. Positions 106 and 127 each coordinate FMN. Residue tyrosine 129 coordinates substrate. Residue threonine 155 coordinates FMN. Residue arginine 164 participates in substrate binding. Residue lysine 251 participates in FMN binding. Histidine 275 (proton acceptor) is an active-site residue. Arginine 278 is a binding site for substrate. 306 to 330 (DSGIRNGLDIVRMLALGADATMLGR) lines the FMN pocket.

The protein belongs to the FMN-dependent alpha-hydroxy acid dehydrogenase family. FMN is required as a cofactor.

It is found in the cell inner membrane. The enzyme catalyses (S)-lactate + A = pyruvate + AH2. Catalyzes the conversion of L-lactate to pyruvate. Is coupled to the respiratory chain. The chain is L-lactate dehydrogenase from Actinobacillus pleuropneumoniae serotype 5b (strain L20).